A 169-amino-acid chain; its full sequence is UPF0398 protein Spy49_1277c (169 aa).

It belongs to the UPF0398 family.

The polypeptide is UPF0398 protein Spy49_1277c (Streptococcus pyogenes serotype M49 (strain NZ131)).